A 445-amino-acid chain; its full sequence is Homogentisate 1,2-dioxygenase (445 aa).

At Lys-98 the chain carries N6-acetyllysine. Residues His-335, Glu-341, and His-371 each contribute to the Fe cation site. Position 414 is an N6-succinyllysine (Lys-414).

Belongs to the homogentisate dioxygenase family. In terms of assembly, homohexamer arranged as a dimer of trimers. Fe cation serves as cofactor. Highest expression in the prostate, small intestine, colon, kidney and liver.

The enzyme catalyses homogentisate + O2 = 4-maleylacetoacetate + H(+). Its pathway is amino-acid degradation; L-phenylalanine degradation; acetoacetate and fumarate from L-phenylalanine: step 4/6. Catalyzes the conversion of homogentisate to maleylacetoacetate. This is Homogentisate 1,2-dioxygenase (HGD) from Homo sapiens (Human).